A 156-amino-acid chain; its full sequence is Phosphopantetheine adenylyltransferase (156 aa).

Position 9 (threonine 9) interacts with substrate. ATP is bound by residues 9–10 (TF) and histidine 17. Substrate-binding residues include lysine 41, leucine 73, and arginine 87. Residues 88-90 (GVR), glutamate 98, and 123-129 (WVFVSST) contribute to the ATP site.

This sequence belongs to the bacterial CoaD family. Homohexamer. It depends on Mg(2+) as a cofactor.

Its subcellular location is the cytoplasm. It catalyses the reaction (R)-4'-phosphopantetheine + ATP + H(+) = 3'-dephospho-CoA + diphosphate. Its pathway is cofactor biosynthesis; coenzyme A biosynthesis; CoA from (R)-pantothenate: step 4/5. Reversibly transfers an adenylyl group from ATP to 4'-phosphopantetheine, yielding dephospho-CoA (dPCoA) and pyrophosphate. This is Phosphopantetheine adenylyltransferase from Haemophilus influenzae (strain PittEE).